The chain runs to 318 residues: Energy-coupling factor transporter ATP-binding protein EcfA2 (318 aa).

In terms of domain architecture, ABC transporter spans 22–271; the sequence is LRAQGLKCVF…PEIMQTTSIA (250 aa). Residue 59–66 participates in ATP binding; that stretch reads GNSGSGKS.

The protein belongs to the ABC transporter superfamily. Energy-coupling factor EcfA family. Forms a stable energy-coupling factor (ECF) transporter complex composed of 2 membrane-embedded substrate-binding proteins (S component), 2 ATP-binding proteins (A component) and 2 transmembrane proteins (T component).

The protein localises to the cell membrane. ATP-binding (A) component of a common energy-coupling factor (ECF) ABC-transporter complex. Unlike classic ABC transporters this ECF transporter provides the energy necessary to transport a number of different substrates. In Mycoplasmoides gallisepticum (strain R(low / passage 15 / clone 2)) (Mycoplasma gallisepticum), this protein is Energy-coupling factor transporter ATP-binding protein EcfA2.